Consider the following 104-residue polypeptide: Large ribosomal subunit protein uL24 (104 aa).

Belongs to the universal ribosomal protein uL24 family. In terms of assembly, part of the 50S ribosomal subunit.

Functionally, one of two assembly initiator proteins, it binds directly to the 5'-end of the 23S rRNA, where it nucleates assembly of the 50S subunit. In terms of biological role, one of the proteins that surrounds the polypeptide exit tunnel on the outside of the subunit. The sequence is that of Large ribosomal subunit protein uL24 from Neorickettsia sennetsu (strain ATCC VR-367 / Miyayama) (Ehrlichia sennetsu).